We begin with the raw amino-acid sequence, 445 residues long: Maltoporin (445 aa).

A signal peptide spans 1–24 (MITLRKLPLAVAVAAGVMSAQAMA).

The protein belongs to the porin LamB (TC 1.B.3) family. As to quaternary structure, homotrimer formed of three 18-stranded antiparallel beta-barrels, containing three independent channels.

It is found in the cell outer membrane. The catalysed reaction is beta-maltose(in) = beta-maltose(out). Its function is as follows. Involved in the transport of maltose and maltodextrins. The chain is Maltoporin from Shigella flexneri.